Here is a 1805-residue protein sequence, read N- to C-terminus: Probable serine/threonine-protein kinase MEC1 homolog (1805 aa).

Positions 406-425 are disordered; the sequence is STEENTKNEGGSGAVENPGR. The FAT domain occupies 928–1420; it reads QILRISFFLK…FWRSLIMMNS (493 aa). The region spanning 1494–1793 is the PI3K/PI4K catalytic domain; the sequence is VRNEVKVFNS…LNEEATNDEN (300 aa). The interval 1500–1506 is G-loop; the sequence is VFNSLQR. Residues 1660–1668 form a catalytic loop region; that stretch reads GLGDRHAEN. The activation loop stretch occupies residues 1680 to 1704; that stretch reads HVDLNCIFGKGKELQVPERVPYRLT. An FATC domain is found at 1773 to 1805; it reads DDLDACSKCDVLNEEATNDENLCMMYIGWLPFI.

This sequence belongs to the PI3/PI4-kinase family. ATM subfamily.

It localises to the nucleus. It catalyses the reaction L-seryl-[protein] + ATP = O-phospho-L-seryl-[protein] + ADP + H(+). The enzyme catalyses L-threonyl-[protein] + ATP = O-phospho-L-threonyl-[protein] + ADP + H(+). In terms of biological role, serine/threonine protein kinase which activates checkpoint signaling upon genotoxic stresses such as ionizing radiation (IR), ultraviolet light (UV), or DNA replication stalling, thereby acting as a DNA damage sensor. Recognizes the substrate consensus sequence [ST]-Q. Recruited to DNA lesions in order to initiate the DNA repair by homologous recombination. Phosphorylates histone H2A to form H2AS128ph (gamma-H2A) at sites of DNA damage, also involved in the regulation of DNA damage response mechanism. Required for cell growth and meiotic recombination. The protein is Probable serine/threonine-protein kinase MEC1 homolog (MEC1) of Encephalitozoon cuniculi (strain GB-M1) (Microsporidian parasite).